We begin with the raw amino-acid sequence, 710 residues long: Methionine--tRNA ligase (710 aa).

A 'HIGH' region motif is present at residues 16 to 26 (PYANGAFHIGH). Residues C147, C150, C160, and C163 each coordinate Zn(2+). The 'KMSKS' region signature appears at 350-354 (KMSKS). K353 is an ATP binding site. Residues 604-710 (DFAKIDLRIA…PGAEPGMRVG (107 aa)) enclose the tRNA-binding domain.

This sequence belongs to the class-I aminoacyl-tRNA synthetase family. MetG type 1 subfamily. Homodimer. Zn(2+) is required as a cofactor.

It is found in the cytoplasm. The enzyme catalyses tRNA(Met) + L-methionine + ATP = L-methionyl-tRNA(Met) + AMP + diphosphate. Functionally, is required not only for elongation of protein synthesis but also for the initiation of all mRNA translation through initiator tRNA(fMet) aminoacylation. This is Methionine--tRNA ligase from Herminiimonas arsenicoxydans.